The primary structure comprises 512 residues: NAD(P)H-quinone oxidoreductase subunit 2, organellar chromatophore (512 aa).

Helical transmembrane passes span 6–26 (LLAL…LLAL), 43–63 (WVPP…ASQW), 80–100 (LAIA…MISW), 107–127 (GAPM…AMFL), 133–153 (LVSI…LAGY), 168–188 (LLVG…LYGL), 210–230 (AALA…AVPF), 242–262 (PTPI…ALAL), 276–296 (WKFL…IVAL), 304–324 (MLAY…VCGT), 332–352 (ILYL…VILF), 376–396 (IGLS…GFFG), 411–431 (LLVV…ISVI), and 464–484 (VALL…NPLF).

This sequence belongs to the complex I subunit 2 family. NDH-1 can be composed of about 15 different subunits; different subcomplexes with different compositions have been identified which probably have different functions.

The protein localises to the plastid. It is found in the organellar chromatophore thylakoid membrane. It carries out the reaction a plastoquinone + NADH + (n+1) H(+)(in) = a plastoquinol + NAD(+) + n H(+)(out). The catalysed reaction is a plastoquinone + NADPH + (n+1) H(+)(in) = a plastoquinol + NADP(+) + n H(+)(out). Its function is as follows. NDH-1 shuttles electrons from an unknown electron donor, via FMN and iron-sulfur (Fe-S) centers, to quinones in the respiratory and/or the photosynthetic chain. The immediate electron acceptor for the enzyme in this species is believed to be plastoquinone. Couples the redox reaction to proton translocation, and thus conserves the redox energy in a proton gradient. Cyanobacterial NDH-1 also plays a role in inorganic carbon-concentration. The protein is NAD(P)H-quinone oxidoreductase subunit 2, organellar chromatophore of Paulinella chromatophora.